Consider the following 307-residue polypeptide: Ribosomal RNA small subunit methyltransferase H (307 aa).

S-adenosyl-L-methionine-binding positions include Gly-32–His-34, Asp-52, Phe-78, Asp-100, and Gln-107.

This sequence belongs to the methyltransferase superfamily. RsmH family.

The protein localises to the cytoplasm. The catalysed reaction is cytidine(1402) in 16S rRNA + S-adenosyl-L-methionine = N(4)-methylcytidine(1402) in 16S rRNA + S-adenosyl-L-homocysteine + H(+). In terms of biological role, specifically methylates the N4 position of cytidine in position 1402 (C1402) of 16S rRNA. In Coxiella burnetii (strain CbuK_Q154) (Coxiella burnetii (strain Q154)), this protein is Ribosomal RNA small subunit methyltransferase H.